We begin with the raw amino-acid sequence, 341 residues long: Glycerol-3-phosphate dehydrogenase [NAD(P)+] (341 aa).

4 residues coordinate NADPH: S14, F15, R35, and K108. 2 residues coordinate sn-glycerol 3-phosphate: K108 and G136. A140 is a binding site for NADPH. Sn-glycerol 3-phosphate is bound by residues K191, D244, S254, R255, and N256. Residue K191 is the Proton acceptor of the active site. Residue R255 participates in NADPH binding. The NADPH site is built by V279 and E281.

This sequence belongs to the NAD-dependent glycerol-3-phosphate dehydrogenase family.

The protein localises to the cytoplasm. It catalyses the reaction sn-glycerol 3-phosphate + NAD(+) = dihydroxyacetone phosphate + NADH + H(+). The catalysed reaction is sn-glycerol 3-phosphate + NADP(+) = dihydroxyacetone phosphate + NADPH + H(+). Its pathway is membrane lipid metabolism; glycerophospholipid metabolism. Its function is as follows. Catalyzes the reduction of the glycolytic intermediate dihydroxyacetone phosphate (DHAP) to sn-glycerol 3-phosphate (G3P), the key precursor for phospholipid synthesis. The sequence is that of Glycerol-3-phosphate dehydrogenase [NAD(P)+] from Pseudomonas fluorescens (strain ATCC BAA-477 / NRRL B-23932 / Pf-5).